The primary structure comprises 200 residues: MEEKKTGTTTVGIKVKEGVVLAADTQASLGNMVETLNIRKILPITDRIAITTAGSVGDVQALARMLEAQARYYQFTWGRPMTTRAMANLLSNILNENKWFPYMVQIIIGGYVDKPELASVDALGGLVFEKYTATGSGSPFAIAIIEDGYREDMSIEEAKELAVRAVKTAGKRDVYTGERKVQVVVITKDGMKEEFVEFKE.

Positions 1–7 (MEEKKTG) are cleaved as a propeptide — removed in mature form; by autocatalysis. The Nucleophile role is filled by T8.

Belongs to the peptidase T1B family. In terms of assembly, the 20S proteasome core is composed of 14 alpha and 14 beta subunits that assemble into four stacked heptameric rings, resulting in a barrel-shaped structure. The two inner rings, each composed of seven catalytic beta subunits, are sandwiched by two outer rings, each composed of seven alpha subunits. The catalytic chamber with the active sites is on the inside of the barrel. Has a gated structure, the ends of the cylinder being occluded by the N-termini of the alpha-subunits. Is capped at one or both ends by the proteasome regulatory ATPase, PAN.

The protein resides in the cytoplasm. The catalysed reaction is Cleavage of peptide bonds with very broad specificity.. With respect to regulation, the formation of the proteasomal ATPase PAN-20S proteasome complex, via the docking of the C-termini of PAN into the intersubunit pockets in the alpha-rings, triggers opening of the gate for substrate entry. Interconversion between the open-gate and close-gate conformations leads to a dynamic regulation of the 20S proteasome proteolysis activity. Its function is as follows. Component of the proteasome core, a large protease complex with broad specificity involved in protein degradation. The protein is Proteasome subunit beta 2 of Thermococcus gammatolerans (strain DSM 15229 / JCM 11827 / EJ3).